A 294-amino-acid chain; its full sequence is NAD kinase (294 aa).

Asp-74 serves as the catalytic Proton acceptor. Residues 74–75, Lys-79, 149–150, Asp-179, 190–195, and Ala-214 each bind NAD(+); these read DG, NE, and TGYSLS.

The protein belongs to the NAD kinase family. A divalent metal cation is required as a cofactor.

It is found in the cytoplasm. The enzyme catalyses NAD(+) + ATP = ADP + NADP(+) + H(+). In terms of biological role, involved in the regulation of the intracellular balance of NAD and NADP, and is a key enzyme in the biosynthesis of NADP. Catalyzes specifically the phosphorylation on 2'-hydroxyl of the adenosine moiety of NAD to yield NADP. The polypeptide is NAD kinase (Christiangramia forsetii (strain DSM 17595 / CGMCC 1.15422 / KT0803) (Gramella forsetii)).